A 197-amino-acid chain; its full sequence is Ribonuclease HII (197 aa).

The region spanning 3–192 (QLIAGVDEVG…VQLSLMQRGG (190 aa)) is the RNase H type-2 domain. Asp9, Glu10, and Asp101 together coordinate a divalent metal cation.

Belongs to the RNase HII family. Mn(2+) serves as cofactor. The cofactor is Mg(2+).

The protein localises to the cytoplasm. The enzyme catalyses Endonucleolytic cleavage to 5'-phosphomonoester.. Endonuclease that specifically degrades the RNA of RNA-DNA hybrids. The polypeptide is Ribonuclease HII (Pseudoalteromonas atlantica (strain T6c / ATCC BAA-1087)).